Consider the following 138-residue polypeptide: Holo-[acyl-carrier-protein] synthase (138 aa).

Residues D11 and E65 each coordinate Mg(2+).

Belongs to the P-Pant transferase superfamily. AcpS family. Mg(2+) is required as a cofactor.

Its subcellular location is the cytoplasm. It carries out the reaction apo-[ACP] + CoA = holo-[ACP] + adenosine 3',5'-bisphosphate + H(+). Its function is as follows. Transfers the 4'-phosphopantetheine moiety from coenzyme A to a Ser of acyl-carrier-protein. This is Holo-[acyl-carrier-protein] synthase from Ralstonia nicotianae (strain ATCC BAA-1114 / GMI1000) (Ralstonia solanacearum).